A 322-amino-acid polypeptide reads, in one-letter code: Probable manganese-dependent inorganic pyrophosphatase (322 aa).

Residues His10, Asp14, Asp16, Asp86, His108, and Asp160 each contribute to the Mn(2+) site.

This sequence belongs to the PPase class C family. Requires Mn(2+) as cofactor.

The protein resides in the cytoplasm. It catalyses the reaction diphosphate + H2O = 2 phosphate + H(+). This Archaeoglobus fulgidus (strain ATCC 49558 / DSM 4304 / JCM 9628 / NBRC 100126 / VC-16) protein is Probable manganese-dependent inorganic pyrophosphatase (ppaC).